Here is a 335-residue protein sequence, read N- to C-terminus: MSQITLPAFHMPFQSAGCHPGLAETREAAWEWAAAEGLDLSVPARRKMIRTRPELWISLIFPQATQAHLDLFCQWLFWAFLVDDEFDDGPAGRDPLMCERAIARLVDVFDGAAPNGPMERALAGLRDRTCRGRSPQWNRQFRRDTAAWLWTYYAEAVERAAGQVPSRAEFAKHRRDSVAMQPFLCLHEITAGIDLPDSARSLPAYIALRNAVTDHSGLCNDICSFEKEAALGYEHNAVRLIQRDRGSTLQEAVDEAGIQLARIAERVQRAERELIEEIEAAGIDGPTRTALERCVRDYRGLVRGDFDYHARAERYTRPDLVELDERDSLSRHFAA.

Mg(2+) contacts are provided by D83, D87, N220, S224, and E228. A DDXXD motif motif is present at residues D83 to D87. An NSE/DTE motif motif is present at residues N220 to E228.

It belongs to the terpene synthase family. Mg(2+) serves as cofactor. The cofactor is Mn(2+).

The catalysed reaction is (2E,6E)-farnesyl diphosphate = (+)-(E)-beta-caryophyllene + diphosphate. It carries out the reaction (+)-(E)-beta-caryophyllene + H2O = (+)-caryolan-1-ol. It participates in secondary metabolite biosynthesis; terpenoid biosynthesis. Its function is as follows. Sesquiterpene cyclase that first catalyzes the cyclization of farnesyl diphosphate (FPP) to the bicyclic sesquiterpene (+)-beta-caryophyllene intermediate, and then its conversion to (+)-caryolan-1-ol via a second cyclization and the addition of a water molecule. This is (+)-caryolan-1-ol synthase (gcoA) from Streptomyces griseus subsp. griseus (strain JCM 4626 / CBS 651.72 / NBRC 13350 / KCC S-0626 / ISP 5235).